Here is a 257-residue protein sequence, read N- to C-terminus: UPF0246 protein Lcho_2652 (257 aa).

This sequence belongs to the UPF0246 family.

The protein is UPF0246 protein Lcho_2652 of Leptothrix cholodnii (strain ATCC 51168 / LMG 8142 / SP-6) (Leptothrix discophora (strain SP-6)).